The primary structure comprises 172 residues: uncharacterized protein (172 aa).

3 consecutive transmembrane segments (helical) span residues 7 to 27 (ILIS…CYGI), 59 to 79 (LMIF…LYLF), and 89 to 109 (FSLT…LFVK).

This sequence to M.jannaschii MJ0695.

It is found in the cell membrane. This is an uncharacterized protein from Methanocaldococcus jannaschii (strain ATCC 43067 / DSM 2661 / JAL-1 / JCM 10045 / NBRC 100440) (Methanococcus jannaschii).